Here is a 66-residue protein sequence, read N- to C-terminus: Large ribosomal subunit protein uL29 (66 aa).

This sequence belongs to the universal ribosomal protein uL29 family.

This Rhizobium leguminosarum bv. trifolii (strain WSM2304) protein is Large ribosomal subunit protein uL29.